A 338-amino-acid chain; its full sequence is GTPase Obg (338 aa).

An Obg domain is found at 1-159 (MKFVDSASVF…FTLDLELKLM (159 aa)). The segment at 123–145 (GGRGNQHFATSTHQAPRHAEPGQ) is disordered. The 164-residue stretch at 160-323 (ADVGLVGFPN…LKDALWRIIV (164 aa)) folds into the OBG-type G domain. Residues 166 to 173 (GFPNAGKS), 191 to 195 (FTTLV), 213 to 216 (DIPG), 280 to 283 (TKMD), and 304 to 306 (SAV) contribute to the GTP site. 2 residues coordinate Mg(2+): Ser173 and Thr193.

The protein belongs to the TRAFAC class OBG-HflX-like GTPase superfamily. OBG GTPase family. In terms of assembly, monomer. The cofactor is Mg(2+).

Its subcellular location is the cytoplasm. In terms of biological role, an essential GTPase which binds GTP, GDP and possibly (p)ppGpp with moderate affinity, with high nucleotide exchange rates and a fairly low GTP hydrolysis rate. Plays a role in control of the cell cycle, stress response, ribosome biogenesis and in those bacteria that undergo differentiation, in morphogenesis control. The polypeptide is GTPase Obg (Chlorobium chlorochromatii (strain CaD3)).